The following is a 474-amino-acid chain: Type I restriction enzyme EcoBI specificity subunit (474 aa).

This sequence belongs to the type-I restriction system S methylase family. The type I restriction/modification system is composed of three polypeptides R, M and S. The restriction enzyme has stoichiometry R(2)M(2)S(1) while the methyltransferase is M(2)S(1).

In terms of biological role, the specificity (S) subunit of a type I restriction enzyme; this subunit dictates DNA sequence specificity. The M and S subunits together form a methyltransferase (MTase) that methylates A-3 on the top strand and A-4 on the bottom strand of the sequence 5'-TGAN(8)TGCT-3'. In the presence of the R subunit the complex can also act as an endonuclease, binding to the same target sequence but cutting the DNA some distance from this site. Whether the DNA is cut or modified depends on the methylation state of the target sequence. When the target site is unmodified, the DNA is cut. When the target site is hemimethylated, the complex acts as a maintenance MTase modifying the DNA so that both strands become methylated. After locating a non-methylated recognition site, the enzyme complex serves as a molecular motor that translocates DNA in an ATP-dependent manner until a collision occurs that triggers cleavage. In Escherichia coli, this protein is Type I restriction enzyme EcoBI specificity subunit.